We begin with the raw amino-acid sequence, 106 residues long: Gibberellin-regulated protein 4 (106 aa).

A signal peptide spans 1-25 (MAKSYGAIFLLTLIVLFMLQTMVMA).

This sequence belongs to the GASA family. Post-translationally, six disulfide bonds may be present. As to expression, expressed in flower buds, style, stamen filaments, vasculature of petals, root phloem, vasculature of cotyledons and rosette leaves and developing embryo.

The protein resides in the secreted. Functionally, gibberellin-regulated protein involved in the regulation of floral meristem and floral organ identity, and promotion of seed size and weight. May play a role in the promotion of gibberellin responses such as regulation of flowering under short-day conditions, seed germination and inhibition of gibberellin oxidase. Possesses redox activity in E.coli and may function in redox regulation in planta. This Arabidopsis thaliana (Mouse-ear cress) protein is Gibberellin-regulated protein 4 (GASA4).